The following is a 227-amino-acid chain: Cytochrome c oxidase subunit 2 (227 aa).

Topologically, residues 1–14 are mitochondrial intermembrane; that stretch reads MAHATQVGLQDATS. Residues 15-45 form a helical membrane-spanning segment; it reads PIMEELISFHDHALMIIFLISFLVLYALFLT. The Mitochondrial matrix segment spans residues 46-59; that stretch reads LTTKLTNTNITDAQ. The helical transmembrane segment at 60-87 threads the bilayer; it reads EMETVWTILPAIILVLIALPSLRILYLT. The Mitochondrial intermembrane portion of the chain corresponds to 88–227; sequence DEINDPSFTI…IFEMGPVFTL (140 aa). Cu cation contacts are provided by histidine 161, cysteine 196, glutamate 198, cysteine 200, histidine 204, and methionine 207. Glutamate 198 is a Mg(2+) binding site.

Belongs to the cytochrome c oxidase subunit 2 family. Component of the cytochrome c oxidase (complex IV, CIV), a multisubunit enzyme composed of 14 subunits. The complex is composed of a catalytic core of 3 subunits MT-CO1, MT-CO2 and MT-CO3, encoded in the mitochondrial DNA, and 11 supernumerary subunits COX4I, COX5A, COX5B, COX6A, COX6B, COX6C, COX7A, COX7B, COX7C, COX8 and NDUFA4, which are encoded in the nuclear genome. The complex exists as a monomer or a dimer and forms supercomplexes (SCs) in the inner mitochondrial membrane with NADH-ubiquinone oxidoreductase (complex I, CI) and ubiquinol-cytochrome c oxidoreductase (cytochrome b-c1 complex, complex III, CIII), resulting in different assemblies (supercomplex SCI(1)III(2)IV(1) and megacomplex MCI(2)III(2)IV(2)). Found in a complex with TMEM177, COA6, COX18, COX20, SCO1 and SCO2. Interacts with TMEM177 in a COX20-dependent manner. Interacts with COX20. Interacts with COX16. It depends on Cu cation as a cofactor.

It localises to the mitochondrion inner membrane. It carries out the reaction 4 Fe(II)-[cytochrome c] + O2 + 8 H(+)(in) = 4 Fe(III)-[cytochrome c] + 2 H2O + 4 H(+)(out). Functionally, component of the cytochrome c oxidase, the last enzyme in the mitochondrial electron transport chain which drives oxidative phosphorylation. The respiratory chain contains 3 multisubunit complexes succinate dehydrogenase (complex II, CII), ubiquinol-cytochrome c oxidoreductase (cytochrome b-c1 complex, complex III, CIII) and cytochrome c oxidase (complex IV, CIV), that cooperate to transfer electrons derived from NADH and succinate to molecular oxygen, creating an electrochemical gradient over the inner membrane that drives transmembrane transport and the ATP synthase. Cytochrome c oxidase is the component of the respiratory chain that catalyzes the reduction of oxygen to water. Electrons originating from reduced cytochrome c in the intermembrane space (IMS) are transferred via the dinuclear copper A center (CU(A)) of subunit 2 and heme A of subunit 1 to the active site in subunit 1, a binuclear center (BNC) formed by heme A3 and copper B (CU(B)). The BNC reduces molecular oxygen to 2 water molecules using 4 electrons from cytochrome c in the IMS and 4 protons from the mitochondrial matrix. The sequence is that of Cytochrome c oxidase subunit 2 (MT-CO2) from Hylobates lar (Lar gibbon).